A 390-amino-acid chain; its full sequence is Cell division protein FtsZ (390 aa).

Residues 21-25 (GGGNN), 108-110 (GTG), E139, R143, and D187 each bind GTP. Residues 315-390 (FDDKPTSHGR…EERRSRRTRR (76 aa)) form a disordered region. Over residues 326 to 360 (SGSTGFGTSVNTSSNATSKDESFTSNSSNAQATDS) the composition is skewed to polar residues. Residues 361 to 384 (VSERTHTTKEDDIPSFIRNREERR) are compositionally biased toward basic and acidic residues.

Belongs to the FtsZ family. In terms of assembly, homodimer. Polymerizes to form a dynamic ring structure in a strictly GTP-dependent manner. Interacts directly with several other division proteins.

The protein resides in the cytoplasm. Its function is as follows. Essential cell division protein that forms a contractile ring structure (Z ring) at the future cell division site. The regulation of the ring assembly controls the timing and the location of cell division. One of the functions of the FtsZ ring is to recruit other cell division proteins to the septum to produce a new cell wall between the dividing cells. Binds GTP and shows GTPase activity. The polypeptide is Cell division protein FtsZ (Staphylococcus aureus (strain NCTC 8325 / PS 47)).